The following is a 313-amino-acid chain: MKLLILTCLVAAAFAMPRLHSRNAVSSQTQQQHSSSEEIFKQPKYLNLNQEFVNNMNRQRALLTEQNDEIKVTMDAASEEQAMASAQEDSSISSSSEESEEAIPNITEQKNIANEDMLNQCTLEQLQRQFKYNQLLQKASLAKQASLFQQPSLVQQASLFQQPSLLQQASLFQQPSMAQQASLLQQLLLAQQPSLALQVSPAQQSSLVQQAFLAQQASLAQKHHPRLSQSYYPHMEQPYRMNAYSQVQMRHPMSVVDQALAQFSVQPFPQIFQYDAFPLWAYFPQDMQYLTPKAVLNTFKPIVSKDTEKTNVW.

Residues M1–A15 form the signal peptide. The span at A77 to S96 shows a compositional bias: low complexity. The disordered stretch occupies residues A77–N111. S90, S91, S93, S94, S95, and S96 each carry phosphoserine. Tandem repeats lie at residues L135–S140, L141–S146, L147–S152, L153–S158, L159–S164, L165–S170, L171–S176, M177–S182, L183–L188, L189–S194, L195–S200, P201–S206, L207–F212, L213–S218, and L219–H224. Residues L135 to H224 form a 15 X 6 AA tandem repeats region.

Belongs to the alpha-casein family. As to expression, mammary gland specific. Secreted in milk.

The protein resides in the secreted. Important role in the capacity of milk to transport calcium phosphate. This is Alpha-S1-casein (Csn1s1) from Mus musculus (Mouse).